The primary structure comprises 242 residues: tRNA (guanine-N(1)-)-methyltransferase (242 aa).

S-adenosyl-L-methionine contacts are provided by residues G111 and 130–135 (IGDYVL).

Belongs to the RNA methyltransferase TrmD family. As to quaternary structure, homodimer.

It is found in the cytoplasm. It carries out the reaction guanosine(37) in tRNA + S-adenosyl-L-methionine = N(1)-methylguanosine(37) in tRNA + S-adenosyl-L-homocysteine + H(+). Its function is as follows. Specifically methylates guanosine-37 in various tRNAs. This is tRNA (guanine-N(1)-)-methyltransferase from Aster yellows witches'-broom phytoplasma (strain AYWB).